The primary structure comprises 159 residues: Capsid protein (159 aa).

Ser2 carries the N-acetylserine; by host modification.

It belongs to the virgaviridae capsid protein family.

It localises to the virion. Functionally, capsid protein self-assembles to form rod-shaped virions about 18 nm in diameter with a central canal enclosing the viral genomic RNA. The chain is Capsid protein (CP) from Nicotiana tabacum (Common tobacco).